Consider the following 229-residue polypeptide: UPF0173 metal-dependent hydrolase SSP1060 (229 aa).

It belongs to the UPF0173 family.

The protein is UPF0173 metal-dependent hydrolase SSP1060 of Staphylococcus saprophyticus subsp. saprophyticus (strain ATCC 15305 / DSM 20229 / NCIMB 8711 / NCTC 7292 / S-41).